The following is a 104-amino-acid chain: Large ribosomal subunit protein uL24 (104 aa).

Belongs to the universal ribosomal protein uL24 family. In terms of assembly, part of the 50S ribosomal subunit.

One of two assembly initiator proteins, it binds directly to the 5'-end of the 23S rRNA, where it nucleates assembly of the 50S subunit. In terms of biological role, one of the proteins that surrounds the polypeptide exit tunnel on the outside of the subunit. In Herminiimonas arsenicoxydans, this protein is Large ribosomal subunit protein uL24.